Consider the following 202-residue polypeptide: Pyridoxal 5'-phosphate synthase subunit PdxT (202 aa).

Residue 52-54 (GES) participates in L-glutamine binding. Cysteine 84 functions as the Nucleophile in the catalytic mechanism. L-glutamine contacts are provided by residues arginine 120 and 148 to 149 (IR). Catalysis depends on charge relay system residues histidine 185 and glutamate 187.

It belongs to the glutaminase PdxT/SNO family. In terms of assembly, in the presence of PdxS, forms a dodecamer of heterodimers. Only shows activity in the heterodimer.

It catalyses the reaction aldehydo-D-ribose 5-phosphate + D-glyceraldehyde 3-phosphate + L-glutamine = pyridoxal 5'-phosphate + L-glutamate + phosphate + 3 H2O + H(+). The catalysed reaction is L-glutamine + H2O = L-glutamate + NH4(+). Its pathway is cofactor biosynthesis; pyridoxal 5'-phosphate biosynthesis. Its function is as follows. Catalyzes the hydrolysis of glutamine to glutamate and ammonia as part of the biosynthesis of pyridoxal 5'-phosphate. The resulting ammonia molecule is channeled to the active site of PdxS. The protein is Pyridoxal 5'-phosphate synthase subunit PdxT of Methanopyrus kandleri (strain AV19 / DSM 6324 / JCM 9639 / NBRC 100938).